The following is a 521-amino-acid chain: MEKSGFSPVGLRVLVVDDDPTWLKILEKMLKKCSYEVTTCGLAREALRLLRERKDGYDIVISDVNMPDMDGFKLLEHVGLELDLPVIMMSVDGETSRVMKGVQHGACDYLLKPIRMKELKIIWQHVLRKKLQEVRDIEGCGYEGGADWITRYDEAHFLGGGEDVSFGKKRKDFDFEKKLLQDESDPSSSSSKKARVVWSFELHHKFVNAVNQIGCDHKAGPKKILDLMNVPWLTRENVASHLQKYRLYLSRLEKGKELKCYSGGVKNADSSPKDVEVNSGYQSPGRSSYVFSGGNSLIQKATEIDPKPLASASLSDLNTDVIMPPKTKKTRIGFDPPISSSAFDSLLPWNDVPEVLESKPVLYENSFLQQQPLPSQSSYVANSAPSLMEEEMKPPYETPAGGSSVNADEFLMPQDKIPTVTLQDLDPSAMKLQEFNTEAILRSLNWELPESHHSVSLDTDLDLTWLQGERFLANTGLQFQDYSSSPSLLSELPAHLNWYGNERLPDPDEYSFMVDQGLFIS.

A Response regulatory domain is found at 12–127 (RVLVVDDDPT…ELKIIWQHVL (116 aa)). Residue Asp63 is modified to 4-aspartylphosphate. Residues 192–195 (KKAR) carry the Nuclear localization signal motif. Residues 195–246 (RVVWSFELHHKFVNAVNQIGCDHKAGPKKILDLMNVPWLTRENVASHLQKYR) constitute a DNA-binding region (myb-like GARP).

Belongs to the ARR family. Type-B subfamily. In terms of assembly, binds the target DNA as a monomer. Two-component system major event consists of a His-to-Asp phosphorelay between a sensor histidine kinase (HK) and a response regulator (RR). In plants, the His-to-Asp phosphorelay involves an additional intermediate named Histidine-containing phosphotransfer protein (HPt). This multistep phosphorelay consists of a His-Asp-His-Asp sequential transfer of a phosphate group between first a His and an Asp of the HK protein, followed by the transfer to a conserved His of the HPt protein and finally the transfer to an Asp in the receiver domain of the RR protein. Detected in the whole plant. Predominantly expressed in roots and stems.

The protein localises to the nucleus. In terms of biological role, transcriptional activator that binds specifically to the DNA sequence 5'-[AG]GATT-3'. Functions as a response regulator involved in His-to-Asp phosphorelay signal transduction system. Phosphorylation of the Asp residue in the receiver domain activates the ability of the protein to promote the transcription of target genes. Could directly activate some type-A response regulators in response to cytokinins. This Arabidopsis thaliana (Mouse-ear cress) protein is Two-component response regulator ARR11 (ARR11).